Consider the following 180-residue polypeptide: Adenine phosphoribosyltransferase (180 aa).

The protein belongs to the purine/pyrimidine phosphoribosyltransferase family. Homodimer.

It is found in the cytoplasm. It carries out the reaction AMP + diphosphate = 5-phospho-alpha-D-ribose 1-diphosphate + adenine. It functions in the pathway purine metabolism; AMP biosynthesis via salvage pathway; AMP from adenine: step 1/1. Its function is as follows. Catalyzes a salvage reaction resulting in the formation of AMP, that is energically less costly than de novo synthesis. The chain is Adenine phosphoribosyltransferase from Haemophilus influenzae (strain 86-028NP).